Consider the following 149-residue polypeptide: 3-dehydroquinate dehydratase (149 aa).

Tyrosine 26 functions as the Proton acceptor in the catalytic mechanism. Substrate contacts are provided by asparagine 75, histidine 81, and aspartate 88. Histidine 101 serves as the catalytic Proton donor. Residues 102 to 103 and arginine 112 each bind substrate; that span reads LS.

Belongs to the type-II 3-dehydroquinase family. As to quaternary structure, homododecamer.

It carries out the reaction 3-dehydroquinate = 3-dehydroshikimate + H2O. It participates in metabolic intermediate biosynthesis; chorismate biosynthesis; chorismate from D-erythrose 4-phosphate and phosphoenolpyruvate: step 3/7. Functionally, catalyzes a trans-dehydration via an enolate intermediate. The chain is 3-dehydroquinate dehydratase from Shewanella woodyi (strain ATCC 51908 / MS32).